The following is a 305-amino-acid chain: Superkiller complex protein 8 (305 aa).

7 WD repeats span residues 14-57 (AHED…LEMQ), 62-101 (GHQL…QIRS), 104-143 (AGPV…KEYS), 146-187 (TRGK…HTLE), 188-227 (GHAM…LAAT), 230-269 (GHGS…CVHT), and 272-305 (DHQD…DCPI).

This sequence belongs to the SKI8 family. As to quaternary structure, component of the PAF1 complex. Component of the SKI complex.

The protein resides in the nucleus. It is found in the cytoplasm. In terms of biological role, component of the PAF1 complex (PAF1C) which has multiple functions during transcription by RNA polymerase II and is implicated in regulation of development and maintenance of embryonic stem cell pluripotency. PAF1C associates with RNA polymerase II through interaction with POLR2A CTD non-phosphorylated and 'Ser-2'- and 'Ser-5'-phosphorylated forms and is involved in transcriptional elongation, acting both independently and synergistically with TCEA1 and in cooperation with the DSIF complex and HTATSF1. Also acts as a component of the SKI complex, a multiprotein complex that assists the RNA-degrading exosome during the mRNA decay and quality-control pathways. The SKI complex catalyzes mRNA extraction from 80S ribosomal complexes in the 3'-5' direction and channels mRNA to the cytosolic exosome for degradation. The sequence is that of Superkiller complex protein 8 (skic8) from Xenopus laevis (African clawed frog).